The following is a 467-amino-acid chain: 3-isopropylmalate dehydratase large subunit (467 aa).

[4Fe-4S] cluster is bound by residues cysteine 347, cysteine 407, and cysteine 410.

This sequence belongs to the aconitase/IPM isomerase family. LeuC type 1 subfamily. In terms of assembly, heterodimer of LeuC and LeuD. The cofactor is [4Fe-4S] cluster.

It catalyses the reaction (2R,3S)-3-isopropylmalate = (2S)-2-isopropylmalate. Its pathway is amino-acid biosynthesis; L-leucine biosynthesis; L-leucine from 3-methyl-2-oxobutanoate: step 2/4. In terms of biological role, catalyzes the isomerization between 2-isopropylmalate and 3-isopropylmalate, via the formation of 2-isopropylmaleate. This chain is 3-isopropylmalate dehydratase large subunit, found in Gloeothece citriformis (strain PCC 7424) (Cyanothece sp. (strain PCC 7424)).